Consider the following 281-residue polypeptide: MKYIGAHVSASGGVDQAVIRAHEIKATAFALFTKNQRQWQAAPLSTEVIDRFKAACEQYAYTSAQILPHDSYLINLGHPDAEALEKSRIAFIDEMARCQQLGLSLLNFHPGSHLKQIEEADCLARIAESINIALAETDGVTAVIENTAGQGSNLGFRFEHLAAIIDGVEDKSRVGVCIDTCHAFAGGYDLRTEADCEATFAEFDRIVGFRYLRGMHLNDAKSAFASRVDRHHSLGEGNIGKTAFSYIMKDARFDGIPMILETINPDIWADEIAWLKSEAQC.

Zn(2+) contacts are provided by His69, His109, Glu145, Asp179, His182, His216, Asp229, His231, and Glu261.

The protein belongs to the AP endonuclease 2 family. It depends on Zn(2+) as a cofactor.

The enzyme catalyses Endonucleolytic cleavage to 5'-phosphooligonucleotide end-products.. In terms of biological role, endonuclease IV plays a role in DNA repair. It cleaves phosphodiester bonds at apurinic or apyrimidinic (AP) sites, generating a 3'-hydroxyl group and a 5'-terminal sugar phosphate. This is Probable endonuclease 4 from Pectobacterium carotovorum subsp. carotovorum (strain PC1).